A 200-amino-acid polypeptide reads, in one-letter code: Dephospho-CoA kinase (200 aa).

The region spanning 4–200 (VIGLTGGIAS…VILKNWNIID (197 aa)) is the DPCK domain. Residue 12-17 (ASGKST) coordinates ATP.

It belongs to the CoaE family.

The protein localises to the cytoplasm. The enzyme catalyses 3'-dephospho-CoA + ATP = ADP + CoA + H(+). It participates in cofactor biosynthesis; coenzyme A biosynthesis; CoA from (R)-pantothenate: step 5/5. Its function is as follows. Catalyzes the phosphorylation of the 3'-hydroxyl group of dephosphocoenzyme A to form coenzyme A. This Bacillus cereus (strain ATCC 10987 / NRS 248) protein is Dephospho-CoA kinase.